We begin with the raw amino-acid sequence, 385 residues long: Mitochondrial protein C2orf69 (385 aa).

The transit peptide at 1 to 24 (MWGFRLLRSPPLLLLLPQLGIGNA) directs the protein to the mitochondrion.

This sequence belongs to the C2orf69 family.

The protein localises to the mitochondrion matrix. Functionally, may play a role in the respiratory chain. The sequence is that of Mitochondrial protein C2orf69 (C2orf69) from Homo sapiens (Human).